The sequence spans 541 residues: Protein yellow (541 aa).

The first 21 residues, 1-21 (MFQDKGWVLVTLIALVTPSWA), serve as a signal peptide directing secretion. An N-linked (GlcNAc...) asparagine glycan is attached at N144.

The protein belongs to the major royal jelly protein family.

It localises to the secreted. Its function is as follows. Controls the pigmentation pattern of the adult cuticle and larval mouth parts. The polypeptide is Protein yellow (y) (Drosophila erecta (Fruit fly)).